The following is a 151-amino-acid chain: Ribosome maturation factor RimP (151 aa).

This sequence belongs to the RimP family.

Its subcellular location is the cytoplasm. Its function is as follows. Required for maturation of 30S ribosomal subunits. This is Ribosome maturation factor RimP from Alcanivorax borkumensis (strain ATCC 700651 / DSM 11573 / NCIMB 13689 / SK2).